The primary structure comprises 397 residues: Multidrug efflux pump subunit AcrA (397 aa).

The N-terminal stretch at 1–24 (MNKNRGFTPLAVVLMLSGSLALTG) is a signal peptide. Cysteine 25 is lipidated: N-palmitoyl cysteine. Cysteine 25 carries S-diacylglycerol cysteine lipidation. A coiled-coil region spans residues 98–172 (PATYQATYDS…AVETARINLA (75 aa)). The disordered stretch occupies residues 377–397 (EVTADNNQQAASGAQPEQSKS). Over residues 379-397 (TADNNQQAASGAQPEQSKS) the composition is skewed to polar residues.

It belongs to the membrane fusion protein (MFP) (TC 8.A.1) family. In terms of assembly, monomeric in solution. Homotrimeric; interacts independently with AcrB and TolC as well as AcrZ. Part of the AcrA-AcrB-TolC efflux pump.

It is found in the cell inner membrane. Functionally, acrA-AcrB-AcrZ-TolC is a drug efflux protein complex with broad substrate specificity that uses the proton motive force to export substrates. This subunit may act as an adapter protein that links AcrB and TolC stably together. This is Multidrug efflux pump subunit AcrA (acrA) from Escherichia coli O157:H7.